The primary structure comprises 887 residues: 3-hydroxy-3-methylglutaryl-coenzyme A reductase (887 aa).

Residues 1-9 (MLSRLFRMH) lie on the Cytoplasmic side of the membrane. The helical transmembrane segment at 10–39 (GLFVASHPWEVIVGTVTLTICMMSMNMFTG) threads the bilayer. The Lumenal segment spans residues 40 to 56 (NNKICGWNYECPKFEED). A helical transmembrane segment spans residues 57 to 78 (VLSSDIIILTITRCIAILYIYF). Residues 61 to 218 (DIIILTITRC…MTFFPACVSL (158 aa)) form the SSD domain. Positions 75-78 (YIYF) match the INSIG-binding motif motif. The Cytoplasmic segment spans residues 79–89 (QFQNLRQLGSK). Residue K89 forms a Glycyl lysine isopeptide (Lys-Gly) (interchain with G-Cter in ubiquitin) linkage. The chain crosses the membrane as a helical span at residues 90-114 (YILGIAGLFTIFSSFVFSTVVIHFL). Residues 115–123 (DKELTGLNE) lie on the Lumenal side of the membrane. Residues 124–149 (ALPFFLLLIDLSRASALAKFALSSNS) traverse the membrane as a helical segment. The Cytoplasmic portion of the chain corresponds to 150 to 159 (QDEVRENIAR). Residues 160 to 187 (GMAILGPTFTLDALVECLVIGVGTMSGV) form a helical membrane-spanning segment. Residues 188–191 (RQLE) are Lumenal-facing. The helical transmembrane segment at 192 to 220 (IMCCFGCMSVLANYFVFMTFFPACVSLVL) threads the bilayer. The Cytoplasmic portion of the chain corresponds to 221–248 (ELSRESREGRPIWQLSHFARVLEEEENK). K248 participates in a covalent cross-link: Glycyl lysine isopeptide (Lys-Gly) (interchain with G-Cter in ubiquitin). A helical transmembrane segment spans residues 249–275 (PNPVTQRVKMIMSLGLVLVHAHSRWIA). Residues 276 to 314 (DPSPQNSTTEHSKVSLGLDEDVSKRIEPSVSLWQFYLSK) are Lumenal-facing. N281 carries an N-linked (GlcNAc...) asparagine glycan. A helical transmembrane segment spans residues 315–339 (MISMDIEQVVTLSLAFLLAVKYIFF). At 340–887 (EQAETESTLS…LQGTCTKKSA (548 aa)) the chain is on the cytoplasmic side. Residues E558, K690, and D766 each act as charge relay system in the active site. H865 (proton donor) is an active-site residue. At S871 the chain carries Phosphoserine; by AMPK.

It belongs to the HMG-CoA reductase family. As to quaternary structure, homotetramer. Homodimer. Interacts (via its SSD) with INSIG1; the interaction, accelerated by sterols, leads to the recruitment of HMGCR to AMFR/gp78 for its ubiquitination by the sterol-mediated ERAD pathway. Interacts with UBIAD1. N-glycosylated. Glycosylated with high mannose chains including Man(6)(GlcNAc)(2), Man(7)(GlcNAc)(2) and Man(8)(GlcNAc)(2). Deglycosylated by NGLY1 on release from the endoplasmic reticulum (ER) in a sterol-mediated manner. In terms of processing, undergoes sterol-mediated ubiquitination and ER-associated degradation (ERAD). Accumulation of sterols in the endoplasmic reticulum (ER) membrane, triggers binding of the reductase to the ER membrane protein INSIG1 or INSIG2. The INSIG1 binding leads to the recruitment of the ubiquitin ligase, AMFR/gp78, RNF139 or RNF145, initiating ubiquitination of the reductase. The ubiquitinated reductase is then extracted from the ER membrane and delivered to cytosolic 26S proteosomes by a mechanism probably mediated by the ATPase Valosin-containing protein VCP/p97. The INSIG2-binding leads to the recruitment of the ubiquitin ligase RNF139, initiating ubiquitination of the reductase. Lys-248 is the main site of ubiquitination. Ubiquitination is enhanced by the presence of a geranylgeranylated protein. Post-translationally, phosphorylated. Phosphorylation at Ser-871 reduces the catalytic activity.

It localises to the endoplasmic reticulum membrane. It is found in the peroxisome membrane. It carries out the reaction (R)-mevalonate + 2 NADP(+) + CoA = (3S)-3-hydroxy-3-methylglutaryl-CoA + 2 NADPH + 2 H(+). It participates in metabolic intermediate biosynthesis; (R)-mevalonate biosynthesis; (R)-mevalonate from acetyl-CoA: step 3/3. Regulated by a negative feedback mechanism through sterols and non-sterol metabolites derived from mevalonate. Phosphorylation at Ser-871 down-regulates the catalytic activity. In terms of biological role, catalyzes the conversion of (3S)-hydroxy-3-methylglutaryl-CoA (HMG-CoA) to mevalonic acid, the rate-limiting step in the synthesis of cholesterol and other isoprenoids, thus plays a critical role in cellular cholesterol homeostasis. In Cricetulus griseus (Chinese hamster), this protein is 3-hydroxy-3-methylglutaryl-coenzyme A reductase (HMGCR).